Here is a 290-residue protein sequence, read N- to C-terminus: Small ribosomal subunit biogenesis GTPase RsgA (290 aa).

Residues 62-219 (RTCLKRPAVA…VADTPGFSRL (158 aa)) enclose the CP-type G domain. GTP is bound by residues 111 to 114 (NKAD) and 161 to 169 (GPSGVGKSS). Residues cysteine 243, cysteine 248, histidine 250, and cysteine 256 each coordinate Zn(2+).

The protein belongs to the TRAFAC class YlqF/YawG GTPase family. RsgA subfamily. Monomer. Associates with 30S ribosomal subunit, binds 16S rRNA. Zn(2+) is required as a cofactor.

The protein resides in the cytoplasm. Its function is as follows. One of several proteins that assist in the late maturation steps of the functional core of the 30S ribosomal subunit. Helps release RbfA from mature subunits. May play a role in the assembly of ribosomal proteins into the subunit. Circularly permuted GTPase that catalyzes slow GTP hydrolysis, GTPase activity is stimulated by the 30S ribosomal subunit. The chain is Small ribosomal subunit biogenesis GTPase RsgA from Moorella thermoacetica (strain ATCC 39073 / JCM 9320).